The sequence spans 311 residues: Coproporphyrin III ferrochelatase 1 (311 aa).

Fe-coproporphyrin III is bound by residues tyrosine 12, arginine 29, 45–46, serine 53, and tyrosine 124; that span reads RY. Fe(2+)-binding residues include histidine 182 and glutamate 263.

Belongs to the ferrochelatase family.

The protein localises to the cytoplasm. The enzyme catalyses Fe-coproporphyrin III + 2 H(+) = coproporphyrin III + Fe(2+). It participates in porphyrin-containing compound metabolism; protoheme biosynthesis. Involved in coproporphyrin-dependent heme b biosynthesis. Catalyzes the insertion of ferrous iron into coproporphyrin III to form Fe-coproporphyrin III. This chain is Coproporphyrin III ferrochelatase 1, found in Bacillus cereus (strain ATCC 14579 / DSM 31 / CCUG 7414 / JCM 2152 / NBRC 15305 / NCIMB 9373 / NCTC 2599 / NRRL B-3711).